A 231-amino-acid chain; its full sequence is AA9 family lytic polysaccharide monooxygenase C (231 aa).

The first 18 residues, 1-18 (MKSGLLFTTASLALTASA), serve as a signal peptide directing secretion. His-19 is a binding site for Cu(2+). A disulfide bond links Cys-60 and Cys-179. N-linked (GlcNAc...) asparagine glycosylation is found at Asn-69 and Asn-143. O2-binding residues include His-165 and Gln-174. Position 176 (Tyr-176) interacts with Cu(2+).

The protein belongs to the polysaccharide monooxygenase AA9 family. The cofactor is Cu(2+).

The protein localises to the secreted. The catalysed reaction is [(1-&gt;4)-beta-D-glucosyl]n+m + reduced acceptor + O2 = 4-dehydro-beta-D-glucosyl-[(1-&gt;4)-beta-D-glucosyl]n-1 + [(1-&gt;4)-beta-D-glucosyl]m + acceptor + H2O.. Its function is as follows. Lytic polysaccharide monooxygenase (LPMO) that depolymerizes crystalline and amorphous polysaccharides via the oxidation of scissile alpha- or beta-(1-4)-glycosidic bonds, yielding C1 oxidation products. Catalysis by LPMOs requires the reduction of the active-site copper from Cu(II) to Cu(I) by a reducing agent and H(2)O(2) or O(2) as a cosubstrate. The protein is AA9 family lytic polysaccharide monooxygenase C of Emericella nidulans (strain FGSC A4 / ATCC 38163 / CBS 112.46 / NRRL 194 / M139) (Aspergillus nidulans).